We begin with the raw amino-acid sequence, 167 residues long: Phospholipase A and acyltransferase 1 (167 aa).

Over 1–138 (MAVNDCFSLT…GEGVSEQANR (138 aa)) the chain is Cytoplasmic. In terms of domain architecture, LRAT spans 20–135 (LIEVFRPCYQ…LRYGEGVSEQ (116 aa)). His-30 is an active-site residue. Cys-119 acts as the Acyl-thioester intermediate in catalysis. The chain crosses the membrane as a helical span at residues 139 to 159 (AIGTIGLVAAGIDIFTFLGLF). The Lumenal portion of the chain corresponds to 160–167 (PKRQGAKS).

The protein belongs to the H-rev107 family.

It is found in the membrane. It localises to the cytoplasm. Its subcellular location is the nucleus. It carries out the reaction a 1,2-diacyl-sn-glycero-3-phosphocholine + H2O = a 1-acyl-sn-glycero-3-phosphocholine + a fatty acid + H(+). The enzyme catalyses a 1,2-diacyl-sn-glycero-3-phosphocholine + H2O = a 2-acyl-sn-glycero-3-phosphocholine + a fatty acid + H(+). It catalyses the reaction 1,2-dihexadecanoyl-sn-glycero-3-phosphocholine + H2O = 2-hexadecanoyl-sn-glycero-3-phosphocholine + hexadecanoate + H(+). The catalysed reaction is 1,2-dihexadecanoyl-sn-glycero-3-phosphocholine + H2O = 1-hexadecanoyl-sn-glycero-3-phosphocholine + hexadecanoate + H(+). It carries out the reaction 1-hexadecanoyl-2-(5Z,8Z,11Z,14Z-eicosatetraenoyl)-sn-glycero-3-phosphoethanolamine + H2O = 2-(5Z,8Z,11Z,14Z)-eicosatetraenoyl-sn-glycero-3-phosphoethanolamine + hexadecanoate + H(+). The enzyme catalyses 1-hexadecanoyl-2-(5Z,8Z,11Z,14Z-eicosatetraenoyl)-sn-glycero-3-phosphoethanolamine + H2O = 1-hexadecanoyl-sn-glycero-3-phosphoethanolamine + (5Z,8Z,11Z,14Z)-eicosatetraenoate + H(+). It catalyses the reaction 1,2-di-(9Z-octadecenoyl)-sn-glycero-3-phosphoethanolamine + 1,2-dihexadecanoyl-sn-glycero-3-phosphocholine = hexadecanoyl-sn-glycero-3-phosphocholine + N-hexadecanoyl-1,2-di-(9Z-octadecenoyl)-sn-glycero-3-phosphoethanolamine + H(+). The catalysed reaction is 1,2-dihexadecanoyl-sn-glycero-3-phosphocholine + a 2-acyl-sn-glycero-3-phosphocholine = a 1-hexadecanoyl-2-acyl-sn-glycero-3-phosphocholine + 2-hexadecanoyl-sn-glycero-3-phosphocholine. Functionally, exhibits both phospholipase A1/2 and acyltransferase activities. Shows phospholipase A1 (PLA1) and A2 (PLA2) activity, catalyzing the calcium-independent release of fatty acids from the sn-1 or sn-2 position of glycerophospholipids. Shows O-acyltransferase activity, catalyzing the transfer of a fatty acyl group from glycerophospholipid to the hydroxyl group of lysophospholipid. The sequence is that of Phospholipase A and acyltransferase 1 from Rattus norvegicus (Rat).